The chain runs to 310 residues: Glutaminase 1 (310 aa).

Positions 66, 117, 161, 168, 192, 244, and 262 each coordinate substrate. At Lys-294 the chain carries N6-acetyllysine.

Belongs to the glutaminase family. In terms of assembly, homotetramer.

The catalysed reaction is L-glutamine + H2O = L-glutamate + NH4(+). This is Glutaminase 1 from Escherichia coli (strain K12).